We begin with the raw amino-acid sequence, 447 residues long: Putative branched-chain amino acid carrier protein SE_1090 (447 aa).

12 helical membrane passes run 5 to 25 (TWII…LIFP), 40 to 60 (ILAF…VGAL), 74 to 94 (PRFS…LFAI), 114 to 134 (GNLA…YLCL), 143 to 163 (IGSL…IKGF), 193 to 213 (GYLT…VNAI), 229 to 249 (IIAG…LGYI), 290 to 310 (LLGI…IVSV), 317 to 337 (ILPK…SFIL), 350 to 370 (VPVL…ILIA), 382 to 402 (IPLI…QGWI), and 417 to 437 (LEWF…SYFV).

The protein belongs to the branched chain amino acid transporter family.

The protein resides in the cell membrane. In terms of biological role, component of the transport system for branched-chain amino acids (leucine, isoleucine and valine), which is coupled to a proton motive force. This chain is Putative branched-chain amino acid carrier protein SE_1090, found in Staphylococcus epidermidis (strain ATCC 12228 / FDA PCI 1200).